The primary structure comprises 672 residues: PHD finger protein MALE STERILITY 1 (672 aa).

The PHD-type zinc-finger motif lies at 614–664; sequence RIECECGATEEDGERMVCCDICEVWQHTRCVGVQHNEEVPRIFLCQSCDQH.

In terms of tissue distribution, in closed flower buds, especially in anthers.

It is found in the nucleus. In terms of biological role, transcriptional activator required for anther and post-meiotic pollen development and maturation. Seems to regulate inflorescence branching and floral development. May control tapetal development by directly regulating tapetal programmed cell death (PCD) and breakdown. Implicated in pollen cytosolic components and wall development (e.g. exine and intine formation). This Arabidopsis thaliana (Mouse-ear cress) protein is PHD finger protein MALE STERILITY 1 (MS1).